The sequence spans 615 residues: Proteasome-associated ATPase (615 aa).

Basic and acidic residues predominate over residues 1 to 13 (MSESQRHEAREDG). The disordered stretch occupies residues 1–32 (MSESQRHEAREDGFTTPHESGLSSEDAAELEE). Residues 22 to 100 (LSSEDAAELE…LREEVDRLGQ (79 aa)) adopt a coiled-coil conformation. 302–307 (GCGKTL) is a binding site for ATP. Residues 614–615 (YL) are docks into pockets in the proteasome alpha-ring.

The protein belongs to the AAA ATPase family. Homohexamer. Assembles into a hexameric ring structure that caps the 20S proteasome core. Strongly interacts with the prokaryotic ubiquitin-like protein Pup through a hydrophobic interface; the interacting region of ARC lies in its N-terminal coiled-coil domain. There is one Pup binding site per ARC hexamer ring. Upon ATP-binding, the C-terminus of ARC interacts with the alpha-rings of the proteasome core, possibly by binding to the intersubunit pockets.

It functions in the pathway protein degradation; proteasomal Pup-dependent pathway. ATPase which is responsible for recognizing, binding, unfolding and translocation of pupylated proteins into the bacterial 20S proteasome core particle. May be essential for opening the gate of the 20S proteasome via an interaction with its C-terminus, thereby allowing substrate entry and access to the site of proteolysis. Thus, the C-termini of the proteasomal ATPase may function like a 'key in a lock' to induce gate opening and therefore regulate proteolysis. In Mycobacterium sp. (strain JLS), this protein is Proteasome-associated ATPase.